The chain runs to 188 residues: MIEIIEGIYKGRSEGKILVSINGVVFGIITDAESFSEFNEGDKILVYTKLIVSQEDMTIYGFDSKVKKETFEKLIKVSKLGPKTAIKILSSTTVDFLSNAIATGDVEKLSSIPGIGRKTAERMITELKDEFEVVEVNEEMLEAIEALVSLGYSKTQARNAVSKVLKESPNISNVSKIIKEALKILAKI.

The tract at residues 1–63 is domain I; it reads MIEIIEGIYK…QEDMTIYGFD (63 aa). The domain II stretch occupies residues 64–142; the sequence is SKVKKETFEK…VVEVNEEMLE (79 aa). A region of interest (flexible linker) is located at residue Glu-142. Positions 142–188 are domain III; sequence EAIEALVSLGYSKTQARNAVSKVLKESPNISNVSKIIKEALKILAKI.

It belongs to the RuvA family. In terms of assembly, homotetramer. Forms an RuvA(8)-RuvB(12)-Holliday junction (HJ) complex. HJ DNA is sandwiched between 2 RuvA tetramers; dsDNA enters through RuvA and exits via RuvB. An RuvB hexamer assembles on each DNA strand where it exits the tetramer. Each RuvB hexamer is contacted by two RuvA subunits (via domain III) on 2 adjacent RuvB subunits; this complex drives branch migration. In the full resolvosome a probable DNA-RuvA(4)-RuvB(12)-RuvC(2) complex forms which resolves the HJ.

Its subcellular location is the cytoplasm. Functionally, the RuvA-RuvB-RuvC complex processes Holliday junction (HJ) DNA during genetic recombination and DNA repair, while the RuvA-RuvB complex plays an important role in the rescue of blocked DNA replication forks via replication fork reversal (RFR). RuvA specifically binds to HJ cruciform DNA, conferring on it an open structure. The RuvB hexamer acts as an ATP-dependent pump, pulling dsDNA into and through the RuvAB complex. HJ branch migration allows RuvC to scan DNA until it finds its consensus sequence, where it cleaves and resolves the cruciform DNA. In Fervidobacterium nodosum (strain ATCC 35602 / DSM 5306 / Rt17-B1), this protein is Holliday junction branch migration complex subunit RuvA.